Consider the following 203-residue polypeptide: Ribosome-binding factor A (203 aa).

Residues leucine 119–valine 141 show a composition bias toward basic and acidic residues. The segment at leucine 119 to arginine 203 is disordered. Residues aspartate 142 to alanine 169 show a composition bias toward acidic residues.

It belongs to the RbfA family. In terms of assembly, monomer. Binds 30S ribosomal subunits, but not 50S ribosomal subunits or 70S ribosomes.

Its subcellular location is the cytoplasm. Its function is as follows. One of several proteins that assist in the late maturation steps of the functional core of the 30S ribosomal subunit. Associates with free 30S ribosomal subunits (but not with 30S subunits that are part of 70S ribosomes or polysomes). Required for efficient processing of 16S rRNA. May interact with the 5'-terminal helix region of 16S rRNA. The polypeptide is Ribosome-binding factor A (Frankia alni (strain DSM 45986 / CECT 9034 / ACN14a)).